The primary structure comprises 211 residues: ATP phosphoribosyltransferase (211 aa).

This sequence belongs to the ATP phosphoribosyltransferase family. Short subfamily. As to quaternary structure, heteromultimer composed of HisG and HisZ subunits.

It is found in the cytoplasm. The catalysed reaction is 1-(5-phospho-beta-D-ribosyl)-ATP + diphosphate = 5-phospho-alpha-D-ribose 1-diphosphate + ATP. It participates in amino-acid biosynthesis; L-histidine biosynthesis; L-histidine from 5-phospho-alpha-D-ribose 1-diphosphate: step 1/9. Its function is as follows. Catalyzes the condensation of ATP and 5-phosphoribose 1-diphosphate to form N'-(5'-phosphoribosyl)-ATP (PR-ATP). Has a crucial role in the pathway because the rate of histidine biosynthesis seems to be controlled primarily by regulation of HisG enzymatic activity. The chain is ATP phosphoribosyltransferase from Bacillus cereus (strain AH187).